The chain runs to 204 residues: Holliday junction branch migration complex subunit RuvA (204 aa).

Positions 1–64 are domain I; that stretch reads MIGKLKGTID…EDQLKLFGFM (64 aa). Positions 65–143 are domain II; the sequence is TALEREWFNL…AFAGEAINIA (79 aa). Positions 144–151 are flexible linker; sequence LKQELGEG. Residues 152–204 form a domain III region; sequence VAAAPVADAVSALTNLGYSRDQAANAVAAAMKTAGDDADSAKLIRLGLKELAR.

Belongs to the RuvA family. As to quaternary structure, homotetramer. Forms an RuvA(8)-RuvB(12)-Holliday junction (HJ) complex. HJ DNA is sandwiched between 2 RuvA tetramers; dsDNA enters through RuvA and exits via RuvB. An RuvB hexamer assembles on each DNA strand where it exits the tetramer. Each RuvB hexamer is contacted by two RuvA subunits (via domain III) on 2 adjacent RuvB subunits; this complex drives branch migration. In the full resolvosome a probable DNA-RuvA(4)-RuvB(12)-RuvC(2) complex forms which resolves the HJ.

The protein localises to the cytoplasm. Functionally, the RuvA-RuvB-RuvC complex processes Holliday junction (HJ) DNA during genetic recombination and DNA repair, while the RuvA-RuvB complex plays an important role in the rescue of blocked DNA replication forks via replication fork reversal (RFR). RuvA specifically binds to HJ cruciform DNA, conferring on it an open structure. The RuvB hexamer acts as an ATP-dependent pump, pulling dsDNA into and through the RuvAB complex. HJ branch migration allows RuvC to scan DNA until it finds its consensus sequence, where it cleaves and resolves the cruciform DNA. The protein is Holliday junction branch migration complex subunit RuvA of Rhizobium leguminosarum bv. trifolii (strain WSM2304).